The following is a 573-amino-acid chain: Phosphoenolpyruvate-protein phosphotransferase (573 aa).

H190 acts as the Tele-phosphohistidine intermediate in catalysis. Positions 297 and 332 each coordinate phosphoenolpyruvate. Positions 431 and 455 each coordinate Mg(2+). Phosphoenolpyruvate is bound by residues 454 to 455 (ND) and R465. C502 serves as the catalytic Proton donor.

It belongs to the PEP-utilizing enzyme family. Homodimer. The cofactor is Mg(2+).

The protein resides in the cytoplasm. It catalyses the reaction L-histidyl-[protein] + phosphoenolpyruvate = N(pros)-phospho-L-histidyl-[protein] + pyruvate. Its activity is regulated as follows. Irreversibly inhibited the sulfhydryl reagent N-ethylmaleimide (NEM). In terms of biological role, general (non sugar-specific) component of the phosphoenolpyruvate-dependent sugar phosphotransferase system (sugar PTS). This major carbohydrate active-transport system catalyzes the phosphorylation of incoming sugar substrates concomitantly with their translocation across the cell membrane. Enzyme I transfers the phosphoryl group from phosphoenolpyruvate (PEP) to the phosphoryl carrier protein (HPr). This is Phosphoenolpyruvate-protein phosphotransferase (ptsI) from Mycoplasma capricolum subsp. capricolum (strain California kid / ATCC 27343 / NCTC 10154).